We begin with the raw amino-acid sequence, 256 residues long: Phosphoribosylaminoimidazole-succinocarboxamide synthase (256 aa).

Positions 234 to 256 are disordered; that stretch reads KPQKPAAAKKKAPVSKKTVKRTR. Basic residues predominate over residues 240–256; the sequence is AAKKKAPVSKKTVKRTR.

This sequence belongs to the SAICAR synthetase family.

It catalyses the reaction 5-amino-1-(5-phospho-D-ribosyl)imidazole-4-carboxylate + L-aspartate + ATP = (2S)-2-[5-amino-1-(5-phospho-beta-D-ribosyl)imidazole-4-carboxamido]succinate + ADP + phosphate + 2 H(+). The protein operates within purine metabolism; IMP biosynthesis via de novo pathway; 5-amino-1-(5-phospho-D-ribosyl)imidazole-4-carboxamide from 5-amino-1-(5-phospho-D-ribosyl)imidazole-4-carboxylate: step 1/2. In Methanoregula boonei (strain DSM 21154 / JCM 14090 / 6A8), this protein is Phosphoribosylaminoimidazole-succinocarboxamide synthase.